The primary structure comprises 421 residues: Imidazolonepropionase (421 aa).

Fe(3+) is bound by residues His81 and His83. The Zn(2+) site is built by His81 and His83. Arg90, Tyr153, and His186 together coordinate 4-imidazolone-5-propanoate. Residue Tyr153 participates in N-formimidoyl-L-glutamate binding. Residue His251 coordinates Fe(3+). A Zn(2+)-binding site is contributed by His251. Glu254 serves as a coordination point for 4-imidazolone-5-propanoate. Asp326 is a binding site for Fe(3+). Residue Asp326 coordinates Zn(2+). The N-formimidoyl-L-glutamate site is built by Asn328 and Gly330. Ser331 provides a ligand contact to 4-imidazolone-5-propanoate.

This sequence belongs to the metallo-dependent hydrolases superfamily. HutI family. The cofactor is Zn(2+). Fe(3+) serves as cofactor.

The protein localises to the cytoplasm. It catalyses the reaction 4-imidazolone-5-propanoate + H2O = N-formimidoyl-L-glutamate. It participates in amino-acid degradation; L-histidine degradation into L-glutamate; N-formimidoyl-L-glutamate from L-histidine: step 3/3. Catalyzes the hydrolytic cleavage of the carbon-nitrogen bond in imidazolone-5-propanoate to yield N-formimidoyl-L-glutamate. It is the third step in the universal histidine degradation pathway. This chain is Imidazolonepropionase, found in Streptococcus pyogenes serotype M28 (strain MGAS6180).